The following is a 125-amino-acid chain: Small ribosomal subunit protein uS12 (125 aa).

At Asp89 the chain carries 3-methylthioaspartic acid.

The protein belongs to the universal ribosomal protein uS12 family. In terms of assembly, part of the 30S ribosomal subunit. Contacts proteins S8 and S17. May interact with IF1 in the 30S initiation complex.

Functionally, with S4 and S5 plays an important role in translational accuracy. In terms of biological role, interacts with and stabilizes bases of the 16S rRNA that are involved in tRNA selection in the A site and with the mRNA backbone. Located at the interface of the 30S and 50S subunits, it traverses the body of the 30S subunit contacting proteins on the other side and probably holding the rRNA structure together. The combined cluster of proteins S8, S12 and S17 appears to hold together the shoulder and platform of the 30S subunit. The protein is Small ribosomal subunit protein uS12 of Bordetella petrii (strain ATCC BAA-461 / DSM 12804 / CCUG 43448).